Reading from the N-terminus, the 747-residue chain is MAPSFDHLRDEDLDEDDFDVDEVDISDIREKYEVQLEQGYDAFVVVDGLPEVNEEQKPKLVKFLLKKLNTVGKTREDLIFMPMGEDGKSLRFAFVEYSSPAEAAAACRQLDLVPLDKKHTLRVNKLTDVDRYGREGRIDDEYTPPKIEEFQEKEHLRSFMADPSGRGRDQFVMFRGESVGVFWNNEKDTPENIVDRQHWTETFVQWSPLGTYLTSVHAQGVQLWGGPSWTRQRRFAHPFVNLVAFSPNEKYLVTWSNRPISIPEEGHPALSVEDDGKNYVIWDIETSKPLRSFAQLDTPAAAEGEAPKKAPKFPWPAFKWSADDKYVARLNPGQSISVYELPRMNLLDKTAIKIEGVVDFDWAPATVQRDGVKSYEQLFCFWTPEIGSNPARVGLMSIPSKQVVRSLNLFSVSDAKLHWQSEGAYLCVKVDRHSKSKKSQATTLEIFRVKEKGVPVEVVDTIKDTVINFAWEPKGDRFVIITTTEPVGATAVPPKTSVAFFCPEKAKGNAVGNFKHLRTLEKKNSNAIYWSPKGRFVVVATVANTQSSDLDFYDLDFEGEKPESDKDLTANLQLMNTADHYGVTDVEWDPSGRFVATWASAWKHSMENGYHLYDFKGEQLREEAIEKFKQFQWRPRPATLLSKEEQKAIRRNLREYSRIFEQEDAERISSADVAVVEARRRLLEEWFAWREAIRQEVAEEREIYGLPADPVADLIKAKTPELATDQEEQVIEEIMEEVLEETEEIVQ.

The 87-residue stretch at 42 to 128 folds into the RRM domain; that stretch reads AFVVVDGLPE…HTLRVNKLTD (87 aa). WD repeat units lie at residues 195 to 234, 236 to 292, 310 to 349, 520 to 563, and 578 to 623; these read DRQH…RQRR, AHPF…PLRS, APKF…LLDK, LEKK…EKPE, and ADHY…LREE.

This sequence belongs to the eIF-3 subunit B family. Component of the eukaryotic translation initiation factor 3 (eIF-3) complex.

The protein localises to the cytoplasm. In terms of biological role, RNA-binding component of the eukaryotic translation initiation factor 3 (eIF-3) complex, which is involved in protein synthesis of a specialized repertoire of mRNAs and, together with other initiation factors, stimulates binding of mRNA and methionyl-tRNAi to the 40S ribosome. The eIF-3 complex specifically targets and initiates translation of a subset of mRNAs involved in cell proliferation. This Neurospora crassa (strain ATCC 24698 / 74-OR23-1A / CBS 708.71 / DSM 1257 / FGSC 987) protein is Eukaryotic translation initiation factor 3 subunit B (prt-1).